We begin with the raw amino-acid sequence, 422 residues long: PHAF1 protein T01G9.2 (422 aa).

This sequence belongs to the PHAF1 family.

It localises to the cytoplasm. It is found in the preautophagosomal structure. May play a regulatory role in autophagic activity. This is PHAF1 protein T01G9.2 from Caenorhabditis elegans.